The sequence spans 905 residues: Alanine--tRNA ligase (905 aa).

Residues H595, H599, C696, and H700 each coordinate Zn(2+).

Belongs to the class-II aminoacyl-tRNA synthetase family. Zn(2+) is required as a cofactor.

The protein localises to the cytoplasm. The enzyme catalyses tRNA(Ala) + L-alanine + ATP = L-alanyl-tRNA(Ala) + AMP + diphosphate. In terms of biological role, catalyzes the attachment of alanine to tRNA(Ala) in a two-step reaction: alanine is first activated by ATP to form Ala-AMP and then transferred to the acceptor end of tRNA(Ala). Also edits incorrectly charged Ser-tRNA(Ala) and Gly-tRNA(Ala) via its editing domain. This is Alanine--tRNA ligase from Anaeromyxobacter dehalogenans (strain 2CP-C).